The sequence spans 1317 residues: DNA-directed RNA polymerase subunit beta' (1317 aa).

The Zn(2+) site is built by Cys60, Cys62, Cys75, and Cys78. The Mg(2+) site is built by Asp535, Asp537, and Asp539. 4 residues coordinate Zn(2+): Cys890, Cys967, Cys974, and Cys977.

It belongs to the RNA polymerase beta' chain family. In terms of assembly, the RNAP catalytic core consists of 2 alpha, 1 beta, 1 beta' and 1 omega subunit. When a sigma factor is associated with the core the holoenzyme is formed, which can initiate transcription. Mg(2+) serves as cofactor. Zn(2+) is required as a cofactor.

The catalysed reaction is RNA(n) + a ribonucleoside 5'-triphosphate = RNA(n+1) + diphosphate. DNA-dependent RNA polymerase catalyzes the transcription of DNA into RNA using the four ribonucleoside triphosphates as substrates. The chain is DNA-directed RNA polymerase subunit beta' from Mycolicibacterium smegmatis (strain ATCC 700084 / mc(2)155) (Mycobacterium smegmatis).